Reading from the N-terminus, the 358-residue chain is Peptide chain release factor 1 (358 aa).

N5-methylglutamine is present on glutamine 235.

The protein belongs to the prokaryotic/mitochondrial release factor family. Methylated by PrmC. Methylation increases the termination efficiency of RF1.

Its subcellular location is the cytoplasm. Functionally, peptide chain release factor 1 directs the termination of translation in response to the peptide chain termination codons UAG and UAA. The sequence is that of Peptide chain release factor 1 from Nitrosospira multiformis (strain ATCC 25196 / NCIMB 11849 / C 71).